Reading from the N-terminus, the 308-residue chain is Isoaspartyl peptidase/L-asparaginase (308 aa).

At Met-1 the chain carries N-acetylmethionine. Thr-168 functions as the Nucleophile in the catalytic mechanism. Substrate-binding positions include 196–199 and 219–222; these read RVGD and TGHG.

It belongs to the Ntn-hydrolase family. Heterodimer of an alpha and beta chain produced by autocleavage. This heterodimer may then dimerize in turn, giving rise to a heterotetramer. Post-translationally, cleaved into an alpha and beta chain by autocatalysis; this activates the enzyme. The N-terminal residue of the beta subunit is responsible for the nucleophile hydrolase activity.

Its subcellular location is the cytoplasm. The catalysed reaction is L-asparagine + H2O = L-aspartate + NH4(+). The enzyme catalyses Cleavage of a beta-linked Asp residue from the N-terminus of a polypeptide.. Has both L-asparaginase and beta-aspartyl peptidase activity. May be involved in the production of L-aspartate, which can act as an excitatory neurotransmitter in some brain regions. Is highly active with L-Asp beta-methyl ester. Besides, has catalytic activity toward beta-aspartyl dipeptides and their methyl esters, including beta-L-Asp-L-Phe, beta-L-Asp-L-Phe methyl ester (aspartame), beta-L-Asp-L-Ala, beta-L-Asp-L-Leu and beta-L-Asp-L-Lys. Does not have aspartylglucosaminidase activity and is inactive toward GlcNAc-L-Asn. Likewise, has no activity toward glutamine. The protein is Isoaspartyl peptidase/L-asparaginase (ASRGL1) of Macaca fascicularis (Crab-eating macaque).